A 120-amino-acid polypeptide reads, in one-letter code: MFKKIDKNANRVKRHLRIRKNLTGTSEKPRLCVFKSNTNIYAQLIDDVNHNTLVAASTLDKDFSGESKSNKEAAKLVGELIGKKAIDKGIEQCVFDRSGYLYHGKVKELAEGARSAGLKF.

The protein belongs to the universal ribosomal protein uL18 family. Part of the 50S ribosomal subunit; part of the 5S rRNA/L5/L18/L25 subcomplex. Contacts the 5S and 23S rRNAs.

Its function is as follows. This is one of the proteins that bind and probably mediate the attachment of the 5S RNA into the large ribosomal subunit, where it forms part of the central protuberance. The polypeptide is Large ribosomal subunit protein uL18 (Finegoldia magna (strain ATCC 29328 / DSM 20472 / WAL 2508) (Peptostreptococcus magnus)).